A 639-amino-acid polypeptide reads, in one-letter code: Lipoteichoic acid synthase 1 (639 aa).

At 1–3 (MKK) the chain is on the cytoplasmic side. The helical transmembrane segment at 4–24 (LFSYKLSFFVLAVILFWAKTY) threads the bilayer. The Extracellular portion of the chain corresponds to 25–41 (LSYKTEFNLGVKGTTQE). A helical membrane pass occupies residues 42–62 (ILLIFNPFSSAVFFLGLALLA). Over 63-67 (KGRKS) the chain is Cytoplasmic. The chain crosses the membrane as a helical span at residues 68–88 (AIIMLIIDFLMTFVLYANILF). Over 89–116 (YRFFDDFLTFPNIKQSGNVGNMGDGIFS) the chain is Extracellular. Residues 117–137 (IMAGHDIFYFLDIIILIAVLI) traverse the membrane as a helical segment. Over 138–150 (WRPELKEYKMKKR) the chain is Cytoplasmic. A helical membrane pass occupies residues 151–171 (FASLVILSGIALFFINLHYAE). Residues 172–639 (KDRPQLLTRT…YHYGKEKEIK (468 aa)) are Extracellular-facing. Residues Glu252 and Thr297 each contribute to the Mn(2+) site. Thr297 is a catalytic residue. His413 lines the substrate pocket. 2 residues coordinate Mn(2+): Asp472 and His473.

Belongs to the LTA synthase family. In terms of processing, proteolytically cleaved by the type I signal peptidases SipT and SipV.

It localises to the cell membrane. The protein localises to the secreted. Its pathway is cell wall biogenesis; lipoteichoic acid biosynthesis. Functionally, catalyzes the polymerization of lipoteichoic acid (LTA) polyglycerol phosphate, a reaction that presumably uses phosphatidylglycerol (PG) as substrate. The sequence is that of Lipoteichoic acid synthase 1 (ltaS1) from Bacillus subtilis (strain 168).